A 1357-amino-acid chain; its full sequence is DNA-directed RNA polymerase subunit beta (1357 aa).

This sequence belongs to the RNA polymerase beta chain family. The RNAP catalytic core consists of 2 alpha, 1 beta, 1 beta' and 1 omega subunit. When a sigma factor is associated with the core the holoenzyme is formed, which can initiate transcription.

It carries out the reaction RNA(n) + a ribonucleoside 5'-triphosphate = RNA(n+1) + diphosphate. Functionally, DNA-dependent RNA polymerase catalyzes the transcription of DNA into RNA using the four ribonucleoside triphosphates as substrates. The protein is DNA-directed RNA polymerase subunit beta of Pseudomonas savastanoi pv. phaseolicola (strain 1448A / Race 6) (Pseudomonas syringae pv. phaseolicola (strain 1448A / Race 6)).